The sequence spans 204 residues: Protein GrpE (204 aa).

Basic and acidic residues predominate over residues 1-12 (MSNQEKKMHEEE). Residues 1–37 (MSNQEKKMHEEELQQQETVEADTEAEAEAVGTDADIE) form a disordered region.

The protein belongs to the GrpE family. In terms of assembly, homodimer.

Its subcellular location is the cytoplasm. Participates actively in the response to hyperosmotic and heat shock by preventing the aggregation of stress-denatured proteins, in association with DnaK and GrpE. It is the nucleotide exchange factor for DnaK and may function as a thermosensor. Unfolded proteins bind initially to DnaJ; upon interaction with the DnaJ-bound protein, DnaK hydrolyzes its bound ATP, resulting in the formation of a stable complex. GrpE releases ADP from DnaK; ATP binding to DnaK triggers the release of the substrate protein, thus completing the reaction cycle. Several rounds of ATP-dependent interactions between DnaJ, DnaK and GrpE are required for fully efficient folding. The protein is Protein GrpE of Vibrio proteolyticus (Aeromonas proteolytica).